Here is a 378-residue protein sequence, read N- to C-terminus: Protein RecA (378 aa).

79–86 (GPESSGKT) is an ATP binding site.

This sequence belongs to the RecA family.

Its subcellular location is the cytoplasm. Functionally, can catalyze the hydrolysis of ATP in the presence of single-stranded DNA, the ATP-dependent uptake of single-stranded DNA by duplex DNA, and the ATP-dependent hybridization of homologous single-stranded DNAs. It interacts with LexA causing its activation and leading to its autocatalytic cleavage. This chain is Protein RecA, found in Streptococcus equi subsp. zooepidemicus (strain H70).